Here is a 554-residue protein sequence, read N- to C-terminus: Undecaprenyl phosphate-alpha-4-amino-4-deoxy-L-arabinose arabinosyl transferase (554 aa).

11 helical membrane passes run 4 to 24 (LKDS…LLPV), 87 to 107 (FGSI…ATLL), 115 to 135 (VLAT…TYAV), 178 to 198 (FMTK…PIVI), 206 to 226 (LVVF…PWAL), 262 to 282 (YLPI…GALF), 293 to 313 (ELFF…VAKG), 315 to 335 (LPTY…AYAT), 351 to 371 (VINL…GLGL), 384 to 404 (QKVW…FITL), and 414 to 434 (AAAC…QQVV).

Belongs to the glycosyltransferase 83 family.

It localises to the cell inner membrane. The enzyme catalyses 4-amino-4-deoxy-alpha-L-arabinopyranosyl di-trans,octa-cis-undecaprenyl phosphate + lipid IVA = lipid IIA + di-trans,octa-cis-undecaprenyl phosphate.. Its pathway is lipopolysaccharide metabolism; 4-amino-4-deoxy-beta-L-arabinose-lipid A biosynthesis. In terms of biological role, catalyzes the transfer of the L-Ara4N moiety of the glycolipid undecaprenyl phosphate-alpha-L-Ara4N to lipid A. The modified arabinose is attached to lipid A and is required for resistance to polymyxin and cationic antimicrobial peptides. The protein is Undecaprenyl phosphate-alpha-4-amino-4-deoxy-L-arabinose arabinosyl transferase of Yersinia pseudotuberculosis serotype O:1b (strain IP 31758).